An 809-amino-acid chain; its full sequence is MRTSVIPNRLTPTLTTHPSRRRNDHITTRTSSLKCHLSPSSGDNNDSFNSSLLKTISTTVAVSSAAASAFFLTGSLHSPFPNFSGLNAAAGGGAGGGGGGSSSSGGGGGGWFNGDEGSFWSRILSPARAIADEPKSEDWDSHELPADITVLLGRLSGFKKYKISDILFFDRNKKSKVETQDSFLDMVSLKPGGVYTKAQLQKELESLATCGMFEKVDMEGKTNADGSLGLTISFAESMWERADRFRCINVGLMGQSKPVEMDPDMSEKEKIEFFRRQEREYKRRISSARPCLLPTSVHEEIKDMLAEQGRVSARLLQKIRDRVQSWYHEEGYACAQVVNFGNLNTREVVCEVVEGDITKLSIQYLDKLGNVVEGNTEGPVVQRELPKQLLPGHTFNIEAGKQALRNINSLALFSNIEVNPRPDEMNEGSIIVEIKLKELEQKSAEVSTEWSIVPGRGGRPTLASLQPGGTITFEHRNLQGLNRSLTGSVTTSNFLNPQDDLAFKMEYAHPYLDGVDNPRNRTLRVSCFNSRKLSPVFTGGPGVDEVPSIWVDRAGVKANITENFSRQSKFTYGLVMEEIITRDESNHICSNGQRVLPNGAISADGPPTTLSGTGIDRMAFLQANITRDNTRFVNGTIVGSRNMFQVDQGLGVGSNFPFFNRHQLTVTKFLQLMSVEEGAGKSPPPVLVLHGHYGGCVGDLPSYDAFTLGGPYSVRGYNMGEIGAARNILELAAEIRIPIKGTHVYAFAEHGTDLGSSKDVKGNPTVVYRRMGQGSSYGAGMKLGLVRAEYAVDHNSGTGAVFFRFGERF.

Positions 1–17 are enriched in polar residues; sequence MRTSVIPNRLTPTLTTH. A chloroplast-targeting transit peptide spans 1-35; that stretch reads MRTSVIPNRLTPTLTTHPSRRRNDHITTRTSSLKC. Positions 1-44 are disordered; sequence MRTSVIPNRLTPTLTTHPSRRRNDHITTRTSSLKCHLSPSSGDN. A chloroplast; outer membrane-targeting transit peptide spans 36-131; that stretch reads HLSPSSGDNN…RILSPARAIA (96 aa). The Chloroplast intermembrane segment spans residues 132–143; sequence DEPKSEDWDSHE. A beta stranded membrane pass occupies residues 144–152; the sequence is LPADITVLL. Residues 153–160 lie on the Cytoplasmic side of the membrane; that stretch reads GRLSGFKK. The beta stranded transmembrane segment at 161–169 threads the bilayer; sequence YKISDILFF. The Chloroplast intermembrane portion of the chain corresponds to 170–225; that stretch reads DRNKKSKVETQDSFLDMVSLKPGGVYTKAQLQKELESLATCGMFEKVDMEGKTNAD. Residues 226–234 traverse the membrane as a beta stranded segment; it reads GSLGLTISF. Topologically, residues 235 to 247 are cytoplasmic; sequence AESMWERADRFRC. Residues 248–254 traverse the membrane as a beta stranded segment; it reads INVGLMG. Residues 255–357 lie on the Chloroplast intermembrane side of the membrane; the sequence is QSKPVEMDPD…VVCEVVEGDI (103 aa). Residues 358–365 traverse the membrane as a beta stranded segment; sequence TKLSIQYL. Over 366 to 410 the chain is Cytoplasmic; the sequence is DKLGNVVEGNTEGPVVQRELPKQLLPGHTFNIEAGKQALRNINSL. The beta stranded transmembrane segment at 411–418 threads the bilayer; sequence ALFSNIEV. The Chloroplast intermembrane segment spans residues 419-427; the sequence is NPRPDEMNE. Residues 428 to 436 traverse the membrane as a beta stranded segment; sequence GSIIVEIKL. Residues 437–442 are Cytoplasmic-facing; that stretch reads KELEQK. Residues 443 to 452 traverse the membrane as a beta stranded segment; it reads SAEVSTEWSI. Residues 453–464 lie on the Chloroplast intermembrane side of the membrane; the sequence is VPGRGGRPTLAS. Residues 465–473 form a beta stranded membrane-spanning segment; it reads LQPGGTITF. Over 474–500 the chain is Cytoplasmic; that stretch reads EHRNLQGLNRSLTGSVTTSNFLNPQDD. Residues 501–509 traverse the membrane as a beta stranded segment; it reads LAFKMEYAH. The Chloroplast intermembrane portion of the chain corresponds to 510 to 553; sequence PYLDGVDNPRNRTLRVSCFNSRKLSPVFTGGPGVDEVPSIWVDR. A beta stranded membrane pass occupies residues 554-561; it reads AGVKANIT. The Cytoplasmic portion of the chain corresponds to 562–569; the sequence is ENFSRQSK. Residues 570 to 577 form a beta stranded membrane-spanning segment; it reads FTYGLVME. At 578–684 the chain is on the chloroplast intermembrane side; that stretch reads EIITRDESNH…VEEGAGKSPP (107 aa). A beta stranded transmembrane segment spans residues 685-693; sequence PVLVLHGHY. Topologically, residues 694–705 are cytoplasmic; the sequence is GGCVGDLPSYDA. A beta stranded transmembrane segment spans residues 706 to 714; sequence FTLGGPYSV. At 715–776 the chain is on the chloroplast intermembrane side; sequence RGYNMGEIGA…VYRRMGQGSS (62 aa). The beta stranded transmembrane segment at 777 to 783 threads the bilayer; the sequence is YGAGMKL. Topologically, residues 784-797 are cytoplasmic; the sequence is GLVRAEYAVDHNSG. A beta stranded transmembrane segment spans residues 798-805; the sequence is TGAVFFRF. The Chloroplast intermembrane portion of the chain corresponds to 806 to 809; that stretch reads GERF.

It belongs to the TOC75 family. Part of the TOC core complex that includes a protein for the specific recognition of transit peptides surrounded by a ring composed of four proteins forming translocation channels, and four to five GTP-binding proteins providing energy. This core complex can interact with components of the TIC complex to form a larger import complex. Chloroplastic protein precursors such as prSS (precursor of the RuBisCO small subunit) also interact with these complexes. TOC75 interacts with OEP14, TOC34/OEP34, TOC86/OEP86, TIC55, TIC110/IEP110 and CLPC. In terms of tissue distribution, mostly expressed in young leaves, also present in old leaves, roots and stems (at protein level).

It is found in the plastid. Its subcellular location is the chloroplast outer membrane. Its function is as follows. Mediates the insertion of proteins targeted to the outer membrane of chloroplasts. Required for the import of protein precursors into chloroplasts. Forms the voltage-dependent preprotein translocation channels (hydrophilic beta barrel) of the TOC complex in the chloroplastic outer membrane. The narrowest inner diameter of this channel is approximately 14 Angstroms. The polypeptide is Protein TOC75, chloroplastic (TOC75) (Pisum sativum (Garden pea)).